Consider the following 100-residue polypeptide: Putative pterin-4-alpha-carbinolamine dehydratase (100 aa).

The protein belongs to the pterin-4-alpha-carbinolamine dehydratase family.

It carries out the reaction (4aS,6R)-4a-hydroxy-L-erythro-5,6,7,8-tetrahydrobiopterin = (6R)-L-erythro-6,7-dihydrobiopterin + H2O. The sequence is that of Putative pterin-4-alpha-carbinolamine dehydratase from Bradyrhizobium sp. (strain ORS 278).